The sequence spans 2364 residues: Cytotoxin-L (2364 aa).

The tract at residues 1 to 91 (MSLVNKAQLQ…EVLELKNNSL (91 aa)) is four-helical bundle. The region spanning 96 to 468 (KNLHFIWIGG…APDVRSTINL (373 aa)) is the GT44 domain. Residues 96–468 (KNLHFIWIGG…APDVRSTINL (373 aa)) form a glucosyltransferase region region. Residues 101–103 (IWI), Asn-139, 265–270 (LAAASD), and 286–288 (DVD) contribute to the UDP-alpha-D-glucose site. Residues Asp-288, Glu-515, and Ser-518 each contribute to the Mg(2+) site. 518–520 (SLW) provides a ligand contact to UDP-alpha-D-glucose. Residues 544 to 799 (GEDDILDFSQ…KSKNLHELST (256 aa)) form an autoprocessing region region. Zn(2+) is bound by residues Glu-545 and Asp-546. One can recognise a Peptidase C80 domain in the interval 567-774 (SSSMRTPNKE…EESIIKDISS (208 aa)). 1D-myo-inositol hexakisphosphate-binding residues include Tyr-577, Lys-600, and Lys-647. His-653 provides a ligand contact to Zn(2+). His-653 (for protease activity) is an active-site residue. Catalysis depends on Cys-698, which acts as the Nucleophile; for protease activity. His-757 provides a ligand contact to Zn(2+). Residues Lys-764, Lys-775, and Lys-792 each coordinate 1D-myo-inositol hexakisphosphate. A translocation region region spans residues 800-1500 (LLQEIKNNSN…ESIIRNIYMP (701 aa)). Interaction with host SEMA6A and SEMA6B stretches follow at residues 1433–1438 (CIKLIE), 1466–1471 (DNETKY), 1484–1495 (FTAEFSNESIIR), 1504–1511 (NLFIYSSK), and 1596–1601 (YNNLDP). 19 Cell wall-binding repeats span residues 1833–1852 (VSGLIYINDSLYYFKPPKNN), 1854–1873 (ITGFTTIDDNKYYFDPTKSG), 1876–1895 (SIGEITIDGKDYYFNKQGIL), 1926–1945 (FIGKLNIDGKIYYFEDNYRA), 1946–1965 (AVEWKSLDGETYYFNPKTGE), 1967–1986 (LKGLHQIGDNKYYFDNNGIM), 1987–2006 (QTGFITINDKVFYFNNDGVM), 2007–2026 (QVGYIEVNGKYFYFGKNGER), 2057–2076 (YNGILNFNGKIYFFDISNTA), 2077–2097 (VVGWGILDDGSTYYFDDNTAE), 2099–2118 (CIGLTVINDCKYYFDDNGIR), 2119–2138 (QLGFITINDNIFYFSESGKI), 2139–2158 (ELGYQNINGNYFYIDESGLV), 2209–2224 (ETGWIENETDKYYFDP), 2227–2249 (KKAYKGINVVDDIKYYFDENGIM), 2250–2269 (KTGLISFENNNYYFNEDGKM), 2270–2289 (QFGYLNIKDKMFYFGKDGKM), 2320–2339 (YTGWLDLDGKRYYFTDEYIA), and 2340–2359 (ATSSLTIDGYNYYFDPDTAE). Residues 1835–2364 (GLIYINDSLY…PDTAELVVSE (530 aa)) form a receptor-binding (CROPS) region region.

It belongs to the clostridial glucosylating toxin (LCGT) family. Homomultimer; forms an inactive homomultimer at pH 8, which dissociates at pH 4, leading to cytotoxicity. Interacts with host SEMA6A; interaction promotes toxin entry into host cell. Interacts with host SEMA6B; interaction promotes toxin entry into host cell. Zn(2+) is required as a cofactor. It depends on Mn(2+) as a cofactor. Requires Mg(2+) as cofactor. In terms of processing, undergoes autocatalytic cleavage to release the N-terminal part (Glucosyltransferase TcsL), which constitutes the active part of the toxin, in the host cytosol. 1D-myo-inositol hexakisphosphate-binding (InsP6) activates the peptidase C80 domain and promotes autoprocessing.

It is found in the secreted. Its subcellular location is the host endosome membrane. The protein resides in the host cytoplasm. It localises to the host cytosol. The protein localises to the host cell membrane. The enzyme catalyses L-threonyl-[protein] + UDP-alpha-D-glucose = 3-O-(alpha-D-glucosyl)-L-threonyl-[protein] + UDP + H(+). With respect to regulation, protease activity is activated upon binding to 1D-myo-inositol hexakisphosphate (InsP6), which induces conformational reorganization. Its function is as follows. Precursor of a cytotoxin that targets the vascular endothelium, inducing an anti-inflammatory effect and resulting in lethal toxic shock syndrome. TcsL constitutes the main toxin that mediates the pathology of P.sordellii infection, an anaerobic Gram-positive bacterium found in soil and in the gastrointestinal and vaginal tracts of animals and humans; although the majority of carriers are asymptomatic, pathogenic P.sordellii infections arise rapidly and are highly lethal. This form constitutes the precursor of the toxin: it enters into host cells and mediates autoprocessing to release the active toxin (Glucosyltransferase TcsL) into the host cytosol. Targets vascular endothelium by binding to the semaphorin proteins SEMA6A and SEMA6B, and enters host cells via clathrin-mediated endocytosis. Once entered into host cells, acidification in the endosome promotes the membrane insertion of the translocation region and formation of a pore, leading to translocation of the GT44 and peptidase C80 domains across the endosomal membrane. This activates the peptidase C80 domain and autocatalytic processing, releasing the N-terminal part (Glucosyltransferase TcsL), which constitutes the active part of the toxin, in the cytosol. In terms of biological role, active form of the toxin, which is released into the host cytosol following autoprocessing and inactivates small GTPases. Acts by mediating monoglucosylation of small GTPases of the Ras (H-Ras/HRAS, K-Ras/KRAS and N-Ras/NRAS) family in host cells at the conserved threonine residue located in the switch I region ('Thr-37/35'), using UDP-alpha-D-glucose as the sugar donor. Does not catalyze monoglucosylation of Ral/RALA. Also able to catalyze monoglucosylation of some members of the Rho family (Rac1 and Rap2A), but with less efficiency than with Ras proteins. Monoglucosylation of host small GTPases completely prevents the recognition of the downstream effector, blocking the GTPases in their inactive form and leading to apoptosis. Induces an anti-inflammatory effect, mainly by inactivating Ras proteins which results in blockage of the cell cycle and killing of immune cells. The absence or moderate local inflammatory response allows C.sordellii spreading in deep tissues, production of toxin which is released in the general circulation and causes a toxic shock syndrome. In Paraclostridium sordellii (Clostridium sordellii), this protein is Cytotoxin-L.